Here is a 252-residue protein sequence, read N- to C-terminus: Imidazole glycerol phosphate synthase subunit HisF (252 aa).

Active-site residues include Asp11 and Asp130.

It belongs to the HisA/HisF family. Heterodimer of HisH and HisF.

The protein resides in the cytoplasm. The catalysed reaction is 5-[(5-phospho-1-deoxy-D-ribulos-1-ylimino)methylamino]-1-(5-phospho-beta-D-ribosyl)imidazole-4-carboxamide + L-glutamine = D-erythro-1-(imidazol-4-yl)glycerol 3-phosphate + 5-amino-1-(5-phospho-beta-D-ribosyl)imidazole-4-carboxamide + L-glutamate + H(+). Its pathway is amino-acid biosynthesis; L-histidine biosynthesis; L-histidine from 5-phospho-alpha-D-ribose 1-diphosphate: step 5/9. In terms of biological role, IGPS catalyzes the conversion of PRFAR and glutamine to IGP, AICAR and glutamate. The HisF subunit catalyzes the cyclization activity that produces IGP and AICAR from PRFAR using the ammonia provided by the HisH subunit. The sequence is that of Imidazole glycerol phosphate synthase subunit HisF from Staphylococcus aureus (strain bovine RF122 / ET3-1).